A 481-amino-acid polypeptide reads, in one-letter code: UDP-glycosyltransferase 85C2 (481 aa).

Residue H23 is the Proton acceptor of the active site. H23 lines the an anthocyanidin pocket. Catalysis depends on D120, which acts as the Charge relay. UDP-alpha-D-glucose contacts are provided by T143, Q362, H377, W380, S382, E385, D401, and Q402.

The protein belongs to the UDP-glycosyltransferase family.

The enzyme catalyses steviol + UDP-alpha-D-glucose = steviolmonoside + UDP + H(+). It catalyses the reaction steviolmonoside + UDP-alpha-D-glucose = rubusoside + UDP. Involved in the biosynthesis of steviol glycosides in leaves. Converts steviol to the mono-glycoside steviolmonoside. Converts the mono-glycoside steviolmonoside to the bi-glycoside rubusoside. The protein is UDP-glycosyltransferase 85C2 of Stevia rebaudiana (Stevia).